Reading from the N-terminus, the 391-residue chain is Phosphoglycerate kinase (391 aa).

Substrate-binding positions include Asp-19–Asn-21, Arg-35, His-58–Arg-61, Arg-117, and Arg-150. ATP contacts are provided by residues Lys-201, Glu-323, and Gly-349–Thr-352.

It belongs to the phosphoglycerate kinase family. As to quaternary structure, monomer.

The protein localises to the cytoplasm. The catalysed reaction is (2R)-3-phosphoglycerate + ATP = (2R)-3-phospho-glyceroyl phosphate + ADP. Its pathway is carbohydrate degradation; glycolysis; pyruvate from D-glyceraldehyde 3-phosphate: step 2/5. The sequence is that of Phosphoglycerate kinase from Desulforapulum autotrophicum (strain ATCC 43914 / DSM 3382 / VKM B-1955 / HRM2) (Desulfobacterium autotrophicum).